A 241-amino-acid chain; its full sequence is Glucosamine-6-phosphate deaminase (241 aa).

The active-site Proton acceptor; for enolization step is aspartate 67. Asparagine 136 acts as the For ring-opening step in catalysis. Histidine 138 acts as the Proton acceptor; for ring-opening step in catalysis. Glutamate 143 functions as the For ring-opening step in the catalytic mechanism.

It belongs to the glucosamine/galactosamine-6-phosphate isomerase family. NagB subfamily.

The enzyme catalyses alpha-D-glucosamine 6-phosphate + H2O = beta-D-fructose 6-phosphate + NH4(+). Its pathway is amino-sugar metabolism; N-acetylneuraminate degradation; D-fructose 6-phosphate from N-acetylneuraminate: step 5/5. Catalyzes the reversible isomerization-deamination of glucosamine 6-phosphate (GlcN6P) to form fructose 6-phosphate (Fru6P) and ammonium ion. This chain is Glucosamine-6-phosphate deaminase, found in Clostridium novyi (strain NT).